We begin with the raw amino-acid sequence, 286 residues long: Deleted in azoospermia-like-B (286 aa).

Positions 33–114 constitute an RRM domain; that stretch reads NTVFVGGIDI…PAIRKICTYV (82 aa). In terms of domain architecture, DAZ spans 155–180; the sequence is ACPYPSSPPMAIQQIPVGCQQPGYFQ.

Belongs to the RRM DAZ family. In terms of assembly, interacts with the C-terminus of pabp1 and with epabp. Prior to oocyte maturation, found in a complex with epabp and pum2 proteins and spdy1 mRNA; pum2 dissociates from the complex during maturation.

The protein localises to the cytoplasm. In terms of biological role, RNA-binding protein that is required for primordial germ cell (PGC) differentiation and indirectly necessary for the migration of PGCs through the endoderm. May promote meiotic cell division during spermatogenesis. Shows a preference for G- and U-rich RNAs and probably binds the 3'-UTR of target mRNAs. Stimulates the initiation of translation of mRNAs through the recruitment of poly(A)-binding proteins (PABPs). In Xenopus laevis (African clawed frog), this protein is Deleted in azoospermia-like-B (dazl-b).